The following is a 143-amino-acid chain: UPF0251 protein Rru_A1194 (143 aa).

The disordered stretch occupies residues 100-143 (LDGSACPNRRQRRGPCARRGAAGALARQTGDEPPSSPTDNEKDD). Residues 116-126 (ARRGAAGALAR) are compositionally biased toward low complexity.

Belongs to the UPF0251 family.

This chain is UPF0251 protein Rru_A1194, found in Rhodospirillum rubrum (strain ATCC 11170 / ATH 1.1.1 / DSM 467 / LMG 4362 / NCIMB 8255 / S1).